Reading from the N-terminus, the 156-residue chain is 3-hydroxyacyl-[acyl-carrier-protein] dehydratase FabZ (156 aa).

The active site involves His62.

Belongs to the thioester dehydratase family. FabZ subfamily.

Its subcellular location is the cytoplasm. It catalyses the reaction a (3R)-hydroxyacyl-[ACP] = a (2E)-enoyl-[ACP] + H2O. Involved in unsaturated fatty acids biosynthesis. Catalyzes the dehydration of short chain beta-hydroxyacyl-ACPs and long chain saturated and unsaturated beta-hydroxyacyl-ACPs. The protein is 3-hydroxyacyl-[acyl-carrier-protein] dehydratase FabZ of Parasynechococcus marenigrum (strain WH8102).